The primary structure comprises 357 residues: Isopentenyl-diphosphate delta-isomerase (357 aa).

Position 13–14 (R13–K14) interacts with substrate. FMN-binding positions include S71, S72–T74, S102, and N131. S102–R104 contacts substrate. Q166 serves as a coordination point for substrate. E167 is a binding site for Mg(2+). FMN is bound by residues K198 and A311–R312.

This sequence belongs to the IPP isomerase type 2 family. In terms of assembly, homooctamer. Dimer of tetramers. Requires FMN as cofactor. NADPH is required as a cofactor. It depends on Mg(2+) as a cofactor.

It localises to the cytoplasm. It catalyses the reaction isopentenyl diphosphate = dimethylallyl diphosphate. Involved in the biosynthesis of isoprenoids. Catalyzes the 1,3-allylic rearrangement of the homoallylic substrate isopentenyl (IPP) to its allylic isomer, dimethylallyl diphosphate (DMAPP). In Chlorobium chlorochromatii (strain CaD3), this protein is Isopentenyl-diphosphate delta-isomerase.